Here is a 209-residue protein sequence, read N- to C-terminus: Protein GrpE (209 aa).

It belongs to the GrpE family. As to quaternary structure, homodimer.

The protein resides in the cytoplasm. Participates actively in the response to hyperosmotic and heat shock by preventing the aggregation of stress-denatured proteins, in association with DnaK and GrpE. It is the nucleotide exchange factor for DnaK and may function as a thermosensor. Unfolded proteins bind initially to DnaJ; upon interaction with the DnaJ-bound protein, DnaK hydrolyzes its bound ATP, resulting in the formation of a stable complex. GrpE releases ADP from DnaK; ATP binding to DnaK triggers the release of the substrate protein, thus completing the reaction cycle. Several rounds of ATP-dependent interactions between DnaJ, DnaK and GrpE are required for fully efficient folding. The chain is Protein GrpE from Colwellia psychrerythraea (strain 34H / ATCC BAA-681) (Vibrio psychroerythus).